The sequence spans 470 residues: Neuraminidase (470 aa).

Topologically, residues 1 to 6 (MNPNQK) are intravirion. The chain crosses the membrane as a helical span at residues 7–27 (IICISATGMTLSVVSLLIGIA). The involved in apical transport and lipid raft association stretch occupies residues 11-33 (SATGMTLSVVSLLIGIANLGLNI). Topologically, residues 28 to 470 (NLGLNIGLHY…HDGAEIIYFK (443 aa)) are virion surface. The segment at 36–88 (HYKVGDTPGVNVPNENGTNSTTTIINNNTQNNFTNITNIIQTKTEEKTFLNLT) is hypervariable stalk region. 6 N-linked (GlcNAc...) asparagine; by host glycosylation sites follow: Asn-51, Asn-54, Asn-62, Asn-67, Asn-70, and Asn-86. Residues 91–470 (LCEVNSWHIL…HDGAEIIYFK (380 aa)) form a head of neuraminidase region. Intrachain disulfides connect Cys-92–Cys-419, Cys-124–Cys-129, Cys-184–Cys-231, Cys-233–Cys-238, Cys-279–Cys-292, Cys-281–Cys-290, Cys-319–Cys-337, and Cys-423–Cys-449. Substrate is bound at residue Arg-118. N-linked (GlcNAc...) asparagine; by host glycosylation is present at Asn-146. Asp-151 acts as the Proton donor/acceptor in catalysis. Arg-152 contributes to the substrate binding site. The N-linked (GlcNAc...) asparagine; by host glycan is linked to Asn-201. 277-278 (EE) serves as a coordination point for substrate. Arg-293 provides a ligand contact to substrate. Asp-294, Gly-298, and Asp-325 together coordinate Ca(2+). Substrate is bound at residue Arg-372. N-linked (GlcNAc...) asparagine; by host glycosylation is present at Asn-402. The active-site Nucleophile is Tyr-406.

This sequence belongs to the glycosyl hydrolase 34 family. As to quaternary structure, homotetramer. Requires Ca(2+) as cofactor. In terms of processing, N-glycosylated.

The protein resides in the virion membrane. It localises to the host apical cell membrane. The catalysed reaction is Hydrolysis of alpha-(2-&gt;3)-, alpha-(2-&gt;6)-, alpha-(2-&gt;8)- glycosidic linkages of terminal sialic acid residues in oligosaccharides, glycoproteins, glycolipids, colominic acid and synthetic substrates.. Its activity is regulated as follows. Inhibited by the neuraminidase inhibitors zanamivir (Relenza) and oseltamivir (Tamiflu). These drugs interfere with the release of progeny virus from infected cells and are effective against all influenza strains. Resistance to neuraminidase inhibitors is quite rare. In terms of biological role, catalyzes the removal of terminal sialic acid residues from viral and cellular glycoconjugates. Cleaves off the terminal sialic acids on the glycosylated HA during virus budding to facilitate virus release. Additionally helps virus spread through the circulation by further removing sialic acids from the cell surface. These cleavages prevent self-aggregation and ensure the efficient spread of the progeny virus from cell to cell. Otherwise, infection would be limited to one round of replication. Described as a receptor-destroying enzyme because it cleaves a terminal sialic acid from the cellular receptors. May facilitate viral invasion of the upper airways by cleaving the sialic acid moieties on the mucin of the airway epithelial cells. Likely to plays a role in the budding process through its association with lipid rafts during intracellular transport. May additionally display a raft-association independent effect on budding. Plays a role in the determination of host range restriction on replication and virulence. Sialidase activity in late endosome/lysosome traffic seems to enhance virus replication. The chain is Neuraminidase from Aves (Pig).